The primary structure comprises 300 residues: Ribosomal protein bS6--L-glutamate ligase (300 aa).

In terms of domain architecture, ATP-grasp spans 104–287; sequence MQLLARQGID…IAGKMIRWIE (184 aa). ATP contacts are provided by residues lysine 141, 178 to 179, aspartate 187, and 211 to 213; these read EY and RSN. 3 residues coordinate Mg(2+): aspartate 248, glutamate 260, and asparagine 262. Mn(2+) is bound by residues aspartate 248, glutamate 260, and asparagine 262.

It belongs to the RimK family. Mg(2+) serves as cofactor. Requires Mn(2+) as cofactor.

Functionally, an L-glutamate ligase that catalyzes the ATP-dependent post-translational addition of glutamate residues to the C-terminus of ribosomal protein bS6 (RpsF). Is also able to catalyze the synthesis of poly-alpha-glutamate in vitro, via ATP hydrolysis from unprotected glutamate as substrate. The number of glutamate residues added to either RpsF or to poly-alpha-glutamate changes with pH. The polypeptide is Ribosomal protein bS6--L-glutamate ligase (Escherichia fergusonii (strain ATCC 35469 / DSM 13698 / CCUG 18766 / IAM 14443 / JCM 21226 / LMG 7866 / NBRC 102419 / NCTC 12128 / CDC 0568-73)).